We begin with the raw amino-acid sequence, 636 residues long: Polyadenylate-binding protein 1 (636 aa).

M1 carries the post-translational modification N-acetylmethionine. 4 RRM domains span residues 11–89 (ASLY…WSQR), 99–175 (GNIF…RFKS), 191–268 (TNVY…RAQK), and 294–370 (VNLY…LAQR). Residues 166–289 (RKVFVGRFKS…FEQMKQDRIT (124 aa)) form a UNR-binding region. K299 is subject to N6-methyllysine. S315 carries the post-translational modification Phosphoserine. At T319 the chain carries Phosphothreonine. Omega-N-methylarginine occurs at positions 385, 419, 432, and 436. Residues R455 and R460 each carry the omega-N-methylated arginine; by CARM1 modification. Residues R475 and R481 each carry the omega-N-methylarginine modification. R493 bears the Asymmetric dimethylarginine; alternate mark. Dimethylated arginine; alternate is present on R493. Residue R493 is modified to Omega-N-methylarginine; alternate. R506 carries the omega-N-methylarginine modification. The residue at position 512 (K512) is an N6-acetyllysine. R518 carries the omega-N-methylarginine modification. Residues 542–619 (QEPLTASMLA…AVAVLQAHQA (78 aa)) enclose the PABC domain.

It belongs to the polyadenylate-binding protein type-1 family. As to quaternary structure, may form homodimers. Component of a multisubunit autoregulatory ribonucleoprotein complex (ARC), at least composed of IGF2BP1, PABPC1 and CSDE1. Directly interacts with IGF2BP1. Part of a complex associated with the FOS mCRD domain and consisting of HNRPD, SYNCRIP, PAIP1 and CSDE1/UNR. Interacts with PAIP1 and PAIP2 (via the PABPC1-interacting motifs PAM1 and PAM2). Interacts with PAIP1 with a 1:1 stoichiometry and with PAIP2 with a 1:2 stoichiometry. The interaction with CSDE1 is direct and RNA-independent. Found in a mRNP complex with YBX2. Interacts with TENT2/GLD2. Identified in the spliceosome C complex. Identified in a mRNP complex, at least composed of DHX9, DDX3X, ELAVL1, HNRNPU, IGF2BP1, ILF3, PABPC1, PCBP2, PTBP2, STAU1, STAU2, SYNCRIP and YBX1. The interaction with DDX3X is direct and RNA-independent. This interaction increases in stressed cells and decreases during cell recovery. Identified in a IGF2BP1-dependent mRNP granule complex containing untranslated mRNAs. Interacts with NXF1/TAP. Interacts with PIWIL1. Interacts with AGO1, AGO2, GSPT1 and GSPT2. Interacts with LARP4B. Interacts (via the second and third RRM domains and the C-terminus) with PAIP2B (via central acidic portion and C-terminus). Forms a complex with LARP1 and SHFL. Interacts with LARP4. Interacts with ZFC3H1 in a RNase-sensitive manner. Interacts with TRIM71 (via NHL repeats) in an RNA-dependent manner. Interacts with TENT5C; the interaction has no effect on TENT5C poly(A) polymerase function. Interacts with G3BP1 and G3BP2. Interacts with ENDOV; the interaction is RNA-dependent and stimulates ENDOV activity. Interacts with UPF1; the interaction is RNA-dependent. Interacts with IGF2BP2 and IGF2BP3. May interact with SETX. Interacts with RBM46. Interacts with PAN3 isoform 1/Pan3L and isoform 3/Pan3S (via N-terminus); interaction with isoform 1 is less efficient than with isoform 3. Post-translationally, phosphorylated by MAPKAPK2. In terms of processing, methylated by CARM1. Arg-493 is dimethylated, probably to asymmetric dimethylarginine.

It localises to the cytoplasm. The protein resides in the stress granule. Its subcellular location is the nucleus. The protein localises to the cell projection. It is found in the lamellipodium. Its function is as follows. Binds the poly(A) tail of mRNA, including that of its own transcript, and regulates processes of mRNA metabolism such as pre-mRNA splicing and mRNA stability. Its function in translational initiation regulation can either be enhanced by PAIP1 or repressed by PAIP2. Can probably bind to cytoplasmic RNA sequences other than poly(A) in vivo. Binds to N6-methyladenosine (m6A)-containing mRNAs and contributes to MYC stability by binding to m6A-containing MYC mRNAs. Involved in translationally coupled mRNA turnover. Implicated with other RNA-binding proteins in the cytoplasmic deadenylation/translational and decay interplay of the FOS mRNA mediated by the major coding-region determinant of instability (mCRD) domain. Involved in regulation of nonsense-mediated decay (NMD) of mRNAs containing premature stop codons; for the recognition of premature termination codons (PTC) and initiation of NMD a competitive interaction between UPF1 and PABPC1 with the ribosome-bound release factors is proposed. By binding to long poly(A) tails, may protect them from uridylation by ZCCHC6/ZCCHC11 and hence contribute to mRNA stability. The sequence is that of Polyadenylate-binding protein 1 (Pabpc1) from Rattus norvegicus (Rat).